Reading from the N-terminus, the 426-residue chain is MSKIIDITGREILDSRGNPTVEADVVLEGGVRGRAAVPSGASTGTREAVELRDEDSSRYGGQGVLKAVGHINGDIRQRLVGQEAEAQESIDQAMLDLDGTSSKRRLGANAILAVSLAVARAAALAAEKPLYRYLSADERFQMPVPMMNIINGGAHADNNVDLQEFMIVPVGAGSIAEAVRYGAEVFHALKKVLRGRGLGTGVGDEGGFAPDLSSNVAAIEAILEAITQAGFEPGRDISLALDTASSEFYQDGRYVLASEGKTLDKEEFTGVLASWVEQYPILSVEDGMAEDDWEGWALLTQRLGQRVQLVGDDLFVTNTAILKEGINRGIANSILIKVNQIGTLTETLAAIRMAHEAGYTAVISHRSGETEDTTIADLAVATQSGQIKTGSLSRTDRVAKYNQLLRIEAELGDKAHYPGRQAFTHP.

Glutamine 163 serves as a coordination point for (2R)-2-phosphoglycerate. Glutamate 205 acts as the Proton donor in catalysis. Positions 242, 285, and 312 each coordinate Mg(2+). (2R)-2-phosphoglycerate is bound by residues lysine 337, arginine 366, serine 367, and lysine 388. Catalysis depends on lysine 337, which acts as the Proton acceptor.

It belongs to the enolase family. Component of the RNA degradosome, a multiprotein complex involved in RNA processing and mRNA degradation. Mg(2+) is required as a cofactor.

It is found in the cytoplasm. Its subcellular location is the secreted. The protein resides in the cell surface. It carries out the reaction (2R)-2-phosphoglycerate = phosphoenolpyruvate + H2O. The protein operates within carbohydrate degradation; glycolysis; pyruvate from D-glyceraldehyde 3-phosphate: step 4/5. Functionally, catalyzes the reversible conversion of 2-phosphoglycerate (2-PG) into phosphoenolpyruvate (PEP). It is essential for the degradation of carbohydrates via glycolysis. The chain is Enolase from Nitrosococcus oceani (strain ATCC 19707 / BCRC 17464 / JCM 30415 / NCIMB 11848 / C-107).